The following is a 448-amino-acid chain: MTESVIYSGTSELISADEDNTETTRAHLLSFEQLQAQLKAQQELFQQQRELFNNDNVHTSSIPTLNHTWSFTQGLVVGQLSVIVVVAIFIKFFVFADSSATTTTTSSSNKDISGVIVKRNKNVRGTSNEDKDPNNNKEDDLNSPNLSKISTILEKTYYDVENHSPESLDWFNVLIAQTISQLRTEALLSDNIYHSLNEFLTNSDLPDYMDKIKLTEIDIGDDFPIFSNCRIKHSKDRSGRLEAKIDVDLSDTLTLGIETRLLLNHPRPLTAVLPVQLSVSIVRFSGCLTVALINTNDEEFLDLQNVTTPSPGPSNEPNSQNQTQQPTPVNNSSSRASHDVPSSSETKHSKAKRSQEDTGTALMFSFSPDYRLEFTVKSLIGSRAKLQDVPKISSLIESKLRSWFIERCIEPRFQVVKVPSLWPRRQNTREPVHSNANGIVDKTEEASI.

The Lumenal segment spans residues methionine 1–glycine 74. A helical transmembrane segment spans residues leucine 75–phenylalanine 95. Residues alanine 96–isoleucine 448 lie on the Cytoplasmic side of the membrane. Disordered regions lie at residues arginine 119 to proline 144 and leucine 303 to aspartate 357. The span at serine 127–aspartate 140 shows a compositional bias: basic and acidic residues. An SMP-LTD domain is found at serine 164–proline 419. The segment covering proline 313–serine 332 has biased composition (low complexity). Residues glutamate 345–glutamate 356 are compositionally biased toward basic and acidic residues.

The protein belongs to the MMM1 family. In terms of assembly, homodimer. Component of the ER-mitochondria encounter structure (ERMES) or MDM complex, composed of MMM1, MDM10, MDM12 and MDM34. An MMM1 homodimer associates with one molecule of MDM12 on each side in a pairwise head-to-tail manner, and the SMP-LTD domains of MMM1 and MDM12 generate a continuous hydrophobic tunnel for phospholipid trafficking.

Its subcellular location is the endoplasmic reticulum membrane. Component of the ERMES/MDM complex, which serves as a molecular tether to connect the endoplasmic reticulum (ER) and mitochondria. Components of this complex are involved in the control of mitochondrial shape and protein biogenesis, and function in nonvesicular lipid trafficking between the ER and mitochondria. The MDM12-MMM1 subcomplex functions in the major beta-barrel assembly pathway that is responsible for biogenesis of all outer membrane beta-barrel proteins, and acts in a late step after the SAM complex. The MDM10-MDM12-MMM1 subcomplex further acts in the TOM40-specific pathway after the action of the MDM12-MMM1 complex. Essential for establishing and maintaining the structure of mitochondria and maintenance of mtDNA nucleoids. The sequence is that of Maintenance of mitochondrial morphology protein 1 from Debaryomyces hansenii (strain ATCC 36239 / CBS 767 / BCRC 21394 / JCM 1990 / NBRC 0083 / IGC 2968) (Yeast).